A 52-amino-acid chain; its full sequence is ATP synthase protein 8 (52 aa).

A helical transmembrane segment spans residues 6-26 (PINGFVILCSISLMLLTLLIN).

Belongs to the ATPase protein 8 family. F-type ATPases have 2 components, CF(1) - the catalytic core - and CF(0) - the membrane proton channel.

The protein localises to the mitochondrion membrane. Its function is as follows. Mitochondrial membrane ATP synthase (F(1)F(0) ATP synthase or Complex V) produces ATP from ADP in the presence of a proton gradient across the membrane which is generated by electron transport complexes of the respiratory chain. F-type ATPases consist of two structural domains, F(1) - containing the extramembraneous catalytic core and F(0) - containing the membrane proton channel, linked together by a central stalk and a peripheral stalk. During catalysis, ATP synthesis in the catalytic domain of F(1) is coupled via a rotary mechanism of the central stalk subunits to proton translocation. Part of the complex F(0) domain. Minor subunit located with subunit a in the membrane. The chain is ATP synthase protein 8 (MT-ATP8) from Albinaria turrita (Door snail).